The chain runs to 2627 residues: Telomerase protein component 1 (2627 aa).

4 TEP1 N-terminal repeats span residues 1–30 (MEKL…DLQP), 31–60 (LEKL…DLKT), 61–90 (MEKP…DLKT), and 91–120 (MEKP…SLKS). Disordered stretches follow at residues 193–214 (FDSE…SLGE) and 383–402 (RKHR…GMEP). The TROVE domain maps to 223 to 676 (VKLTSGDSES…VKHSLPLLPG (454 aa)). Residues 383–395 (RKHRAKRHPRRPP) show a composition bias toward basic residues. One can recognise an NACHT domain in the interval 1162 to 1490 (RLSLVTGQSG…PLERPGARLC (329 aa)). 1168 to 1175 (GQSGQGKT) serves as a coordination point for ATP. WD repeat units follow at residues 1411-1448 (VLPQ…TKSW), 1674-1713 (AVSS…EEKS), 1716-1754 (SGCD…RVLQ), 1757-1796 (AHQY…LAFQ), 1798-1837 (TYPK…VTKD), 1840-1879 (APGA…RLAA), 1882-1921 (AHHG…PRGH), 1925-1964 (LSLS…QGAQ), 1967-2005 (ALDV…LQSL), 2008-2047 (LSRF…RPHK), 2059-2098 (GHEG…TPVL), 2105-2143 (CHRD…RLGQ), 2146-2183 (GHQS…LTSI), 2185-2233 (AHSG…QTHT), 2236-2275 (GHSG…DDTC), 2278-2317 (RSSA…ATAQ), 2319-2355 (PGHI…GSAP), 2368-2417 (EDLG…PMIL), and 2459-2500 (NPSR…GEWT). Polar residues predominate over residues 2506-2522 (QKKANTPETQTPGTDPS). The interval 2506 to 2551 (QKKANTPETQTPGTDPSTCRESDASMDSDASMDSEPTPHLKTRQRR) is disordered. WD repeat units lie at residues 2553–2590 (IHSG…LLGL) and 2592–2626 (RCEG…FLNW).

Associated component of the telomerase holoenzyme complex. Component of the vault ribonucleoprotein particle, at least composed of MVP, PARP4 and one or more vault RNAs (vRNAs). Binds to VAULTRC1, VAULTRC2 and VAULTRC4/hvg4 vRNAs. Ubiquitous.

It localises to the nucleus. The protein localises to the chromosome. The protein resides in the telomere. Component of the telomerase ribonucleoprotein complex that is essential for the replication of chromosome termini. Also a component of the ribonucleoprotein vaults particle, a multi-subunit structure involved in nucleo-cytoplasmic transport. Responsible for the localizing and stabilizing vault RNA (vRNA) association in the vault ribonucleoprotein particle. Binds to TERC. This Homo sapiens (Human) protein is Telomerase protein component 1 (TEP1).